Consider the following 633-residue polypeptide: Threonine--tRNA ligase (633 aa).

The region spanning 1–59 is the TGS domain; that stretch reads MIKVTFLAEQKVKEYSGRVTGFDILQPDALREAIAFKVNGELYDLSREIESDTEIEVIQ. The interval 240–532 is catalytic; the sequence is DHRKIAKDMD…LIENYAGKFP (293 aa). Zn(2+) contacts are provided by cysteine 332, histidine 383, and histidine 509.

This sequence belongs to the class-II aminoacyl-tRNA synthetase family. In terms of assembly, homodimer. It depends on Zn(2+) as a cofactor.

The protein resides in the cytoplasm. The enzyme catalyses tRNA(Thr) + L-threonine + ATP = L-threonyl-tRNA(Thr) + AMP + diphosphate + H(+). In terms of biological role, catalyzes the attachment of threonine to tRNA(Thr) in a two-step reaction: L-threonine is first activated by ATP to form Thr-AMP and then transferred to the acceptor end of tRNA(Thr). Also edits incorrectly charged L-seryl-tRNA(Thr). This Wolbachia pipientis subsp. Culex pipiens (strain wPip) protein is Threonine--tRNA ligase.